The following is a 264-amino-acid chain: NADH-quinone oxidoreductase subunit B 1 (264 aa).

[4Fe-4S] cluster-binding residues include cysteine 42, cysteine 43, cysteine 108, and cysteine 138.

Belongs to the complex I 20 kDa subunit family. As to quaternary structure, NDH-1 is composed of 14 different subunits. Subunits NuoB, C, D, E, F, and G constitute the peripheral sector of the complex. The cofactor is [4Fe-4S] cluster.

The protein resides in the cell membrane. The catalysed reaction is a quinone + NADH + 5 H(+)(in) = a quinol + NAD(+) + 4 H(+)(out). In terms of biological role, NDH-1 shuttles electrons from NADH, via FMN and iron-sulfur (Fe-S) centers, to quinones in the respiratory chain. The immediate electron acceptor for the enzyme in this species is believed to be ubiquinone. Couples the redox reaction to proton translocation (for every two electrons transferred, four hydrogen ions are translocated across the cytoplasmic membrane), and thus conserves the redox energy in a proton gradient. The sequence is that of NADH-quinone oxidoreductase subunit B 1 from Chloroflexus aurantiacus (strain ATCC 29366 / DSM 635 / J-10-fl).